Consider the following 527-residue polypeptide: Tubulin-specific chaperone E (527 aa).

At S2 the chain carries N-acetylserine. Residues 27 to 71 (GVVPPVAGPWLGVEWDNPERGKHDGSHEGTVYFKCRHPTGGSFIR) form the CAP-Gly domain. 7 LRR repeats span residues 154–175 (NIRK…IHIA), 180–200 (HLEV…SVLT), 205–226 (VLKV…RCVA), 230–252 (GLEE…DVLQ), 253–274 (TVKL…YLIA), 278–299 (RLEQ…DAGI), and 308–329 (SLKY…NELE). The LRRCT domain occupies 342-384 (NPLTKEDKEAETARLLIIASIGQLKTLNKCEILPEERRRAELD). N6-acetyllysine is present on K463. Phosphoserine is present on S495.

It belongs to the TBCE family. In terms of assembly, supercomplex made of cofactors A to E. Cofactors A and D function by capturing and stabilizing tubulin in a quasi-native conformation. Cofactor E binds to the cofactor D-tubulin complex; interaction with cofactor C then causes the release of tubulin polypeptides that are committed to the native state. Cofactors B and E can form a heterodimer which binds to alpha-tubulin and enhances their ability to dissociate tubulin heterodimers. Interacts with TBCD.

The protein localises to the cytoplasm. Its subcellular location is the cytoskeleton. Functionally, tubulin-folding protein; involved in the second step of the tubulin folding pathway and in the regulation of tubulin heterodimer dissociation. Required for correct organization of microtubule cytoskeleton and mitotic splindle, and maintenance of the neuronal microtubule network. The chain is Tubulin-specific chaperone E (TBCE) from Homo sapiens (Human).